Here is a 424-residue protein sequence, read N- to C-terminus: MFLLLRFVLVSCIIGSLGFDNPPTNVVSHLNGDWFLFGDSRSDCNHVVNTNPRNYSYMDLNPALCDSGKISSKAGNSIFRSFHFTDFYNYTGEGQQIIFYEGVNFTPYHAFKCTTSGSNDIWMQNKGLFYTQVYKNMAVYRSLTFVNVPYVYNGSAQSTALCKSGSLVLNNPAYIAREANFGDYYYKVEADFYLSGCDEYIVPLCIFNGKFLSNTKYYDDSQYYFNKDTGVIYGLNSTETITTGFDFNCHYLVLPSGNYLAISNELLLTVPTKAICLNKRKDFTPVQVVDSRWNNARQSDNMTAVACQPPYCYFRNSTTNYVGVYDINHGDAGFTSILSGLLYDSPCFSQQGVFRYDNVSSVWPLYSYGRCPTAADINTPDVPICVYDPLPLILLGILLGVAVIIIVVLLLYFMVDNGTRLHDA.

2 consecutive signal peptides follow at residues 1-16 (MFLLLRFVLVSCIIGS) and 1-18 (MFLLLRFVLVSCIIGSLG). The tract at residues 7-127 (FVLVSCIIGS…SNDIWMQNKG (121 aa)) is esterase domain 1. Residues 17–392 (LGFDNPPTNV…PICVYDPLPL (376 aa)) lie on the Virion surface side of the membrane. Ser40 acts as the Nucleophile in catalysis. Residues Cys44 and Cys65 are joined by a disulfide bond. N-linked (GlcNAc...) asparagine; by host glycosylation is found at Asn54, Asn89, Asn153, Asn236, and Asn301. Disulfide bonds link Cys113/Cys162, Cys197/Cys276, and Cys205/Cys249. The receptor binding stretch occupies residues 128–266 (LFYTQVYKNM…GNYLAISNEL (139 aa)). The tract at residues 267–379 (LLTVPTKAIC…RCPTAADINT (113 aa)) is esterase domain 2. The cysteines at positions 307 and 312 are disulfide-linked. A glycan (N-linked (GlcNAc...) asparagine; by host) is linked at Asn316. Catalysis depends on charge relay system residues Asp326 and His329. Residues Cys347 and Cys371 are joined by a disulfide bond. The N-linked (GlcNAc...) asparagine; by host glycan is linked to Asn358. The chain crosses the membrane as a helical span at residues 393-413 (ILLGILLGVAVIIIVVLLLYF). At 414-424 (MVDNGTRLHDA) the chain is on the intravirion side. Asn417 carries an N-linked (GlcNAc...) asparagine; by host glycan.

Belongs to the influenza type C/coronaviruses hemagglutinin-esterase family. As to quaternary structure, homodimer; disulfide-linked. Forms a complex with the M protein in the pre-Golgi. Associates then with S-M complex to form a ternary complex S-M-HE. Post-translationally, N-glycosylated in the host RER.

It is found in the virion membrane. It localises to the host cell membrane. The catalysed reaction is N-acetyl-9-O-acetylneuraminate + H2O = N-acetylneuraminate + acetate + H(+). The enzyme catalyses N-acetyl-4-O-acetylneuraminate + H2O = N-acetylneuraminate + acetate + H(+). Structural protein that makes short spikes at the surface of the virus. Contains receptor binding and receptor-destroying activities. Mediates de-O-acetylation of N-acetyl-4-O-acetylneuraminic acid, which is probably the receptor determinant recognized by the virus on the surface of erythrocytes and susceptible cells. This receptor-destroying activity is important for virus release as it probably helps preventing self-aggregation and ensures the efficient spread of the progeny virus from cell to cell. May serve as a secondary viral attachment protein for initiating infection, the spike protein being the major one. May become a target for both the humoral and the cellular branches of the immune system. The protein is Hemagglutinin-esterase of Bos taurus (Bovine).